The sequence spans 71 residues: SPI-2 type 3 secretion system needle filament protein (71 aa).

Belongs to the SctF family. The core secretion machinery of the T3SS is composed of approximately 20 different proteins, including cytoplasmic components, a base, an export apparatus and a needle. This subunit polymerizes and forms the helical needle filament.

The protein resides in the secreted. It localises to the cell surface. Functionally, component of the type III secretion system (T3SS), also called injectisome, which is used to inject bacterial effector proteins into eukaryotic host cells. SsaG/SctF2 forms the external needle filament that protrudes from the bacterial surface. Its function is as follows. During infection, can induce innate immune responses. The needle proteins interact with host TLR2 or TLR4, and induce signaling by NF-kappa-B and/or AP-1. This activation is MyD88 dependent and results in increased expression of cytokines, including TNF-alpha, IL-6 and IL-8. This chain is SPI-2 type 3 secretion system needle filament protein, found in Salmonella typhimurium (strain LT2 / SGSC1412 / ATCC 700720).